Reading from the N-terminus, the 410-residue chain is BTB and MATH domain-containing protein 42 (410 aa).

Over residues 1 to 19 the composition is skewed to polar residues; it reads MSSRSSWSSTEQINRTISS. The disordered stretch occupies residues 1–29; sequence MSSRSSWSSTEQINRTISSRADDLPPQPR. In terms of domain architecture, MATH spans 45 to 173; sequence STKLEWKIEQ…DGTLFLICEV (129 aa). Residues 219 to 287 form the BTB domain; the sequence is TDCVIHVGNK…MYTGATESLE (69 aa). Positions 389–410 are disordered; that stretch reads TSNIPISVSPPPARKRLRRSAK. Positions 401-410 are enriched in basic residues; that stretch reads ARKRLRRSAK.

In terms of assembly, interacts with cul-3.

Its pathway is protein modification; protein ubiquitination. Its function is as follows. Probable substrate-specific adapter of an E3 ubiquitin-protein ligase complex which mediates the ubiquitination and subsequent proteasomal degradation of target proteins. The sequence is that of BTB and MATH domain-containing protein 42 (bath-42) from Caenorhabditis elegans.